The primary structure comprises 306 residues: UDP-N-acetylenolpyruvoylglucosamine reductase (306 aa).

Positions 25–188 (RVGGPADWLF…IEARFRAEPG (164 aa)) constitute an FAD-binding PCMH-type domain. R168 is a catalytic residue. The span at 199–214 (EQLARRDASQPTKDRS) shows a compositional bias: basic and acidic residues. The segment at 199–232 (EQLARRDASQPTKDRSAGSTFRNPAGYSSTGRAD) is disordered. Positions 215–229 (AGSTFRNPAGYSSTG) are enriched in polar residues. S217 (proton donor) is an active-site residue. Residue E299 is part of the active site.

It belongs to the MurB family. FAD serves as cofactor.

It is found in the cytoplasm. It catalyses the reaction UDP-N-acetyl-alpha-D-muramate + NADP(+) = UDP-N-acetyl-3-O-(1-carboxyvinyl)-alpha-D-glucosamine + NADPH + H(+). Its pathway is cell wall biogenesis; peptidoglycan biosynthesis. Its function is as follows. Cell wall formation. The chain is UDP-N-acetylenolpyruvoylglucosamine reductase from Paracoccus denitrificans (strain Pd 1222).